The primary structure comprises 541 residues: Peptide chain release factor 3 (541 aa).

The tr-type G domain maps to 14 to 283; it reads EARRNFAIIS…AFLDYALKPG (270 aa). GTP is bound by residues 23–30, 91–95, and 145–148; these read SHPDAGKT, DTPGH, and NKLD.

It belongs to the TRAFAC class translation factor GTPase superfamily. Classic translation factor GTPase family. PrfC subfamily.

It localises to the cytoplasm. Increases the formation of ribosomal termination complexes and stimulates activities of RF-1 and RF-2. It binds guanine nucleotides and has strong preference for UGA stop codons. It may interact directly with the ribosome. The stimulation of RF-1 and RF-2 is significantly reduced by GTP and GDP, but not by GMP. The polypeptide is Peptide chain release factor 3 (Acaryochloris marina (strain MBIC 11017)).